Reading from the N-terminus, the 73-residue chain is U-scoloptoxin(22)-Cw1a (73 aa).

An N-terminal signal peptide occupies residues 1 to 24 (MRRFVFLAFVLVLFVIANLDSSSA).

It belongs to the scoloptoxin-22 family. In terms of processing, contains 1 disulfide bond. As to expression, expressed by the venom gland.

Its subcellular location is the secreted. This chain is U-scoloptoxin(22)-Cw1a, found in Cormocephalus westwoodi (Westwood's green centipede).